Here is a 329-residue protein sequence, read N- to C-terminus: Ribose-phosphate pyrophosphokinase B (329 aa).

Asp-131, His-133, and Glu-146 together coordinate Mg(2+). The tract at residues 227-242 (TGKIAIIIDDIADTCK) is binding of phosphoribosylpyrophosphate.

It belongs to the ribose-phosphate pyrophosphokinase family. It depends on Mg(2+) as a cofactor.

Its subcellular location is the cytoplasm. It carries out the reaction D-ribose 5-phosphate + ATP = 5-phospho-alpha-D-ribose 1-diphosphate + AMP + H(+). Its pathway is metabolic intermediate biosynthesis; 5-phospho-alpha-D-ribose 1-diphosphate biosynthesis; 5-phospho-alpha-D-ribose 1-diphosphate from D-ribose 5-phosphate (route I): step 1/1. The sequence is that of Ribose-phosphate pyrophosphokinase B (prsB) from Dictyostelium discoideum (Social amoeba).